Consider the following 824-residue polypeptide: Silver exporting P-type ATPase (824 aa).

Residues 89–112 form a disordered region; the sequence is ASEHHHHHDHHEVSPDKIKQSHRQ. A compositionally biased stretch (basic and acidic residues) spans 98–112; it reads HHEVSPDKIKQSHRQ. 6 consecutive transmembrane segments (helical) span residues 167-187, 200-220, 234-254, 268-288, 427-447, and 455-475; these read FWLGLLLAFPVLILEMGSHLF, TWLQLLLASPVVLWCGWPFFA, FTLVAMGTGVAWVYSVIATVF, LVAIYFEAAAVITVLVLLGQV, WFVPLVILIAVVAFMIWSVWG, and GLIAAVSVLIIACPCALGLAT. Aspartate 511 functions as the 4-aspartylphosphate intermediate in the catalytic mechanism. 2 consecutive transmembrane segments (helical) span residues 764-784 and 785-805; these read IRQNLFFAFIYNALGVPVAAG and LLYPVYGILLSPVIAAAAMAL.

It belongs to the cation transport ATPase (P-type) (TC 3.A.3) family. Type IB subfamily.

It is found in the cell membrane. It catalyses the reaction Ag(+)(in) + ATP + H2O = Ag(+)(out) + ADP + phosphate + H(+). In terms of biological role, component of the sil cation-efflux system that confers resistance to silver. The polypeptide is Silver exporting P-type ATPase (silP) (Salmonella typhimurium).